The chain runs to 192 residues: Ion-translocating oxidoreductase complex subunit A (192 aa).

Transmembrane regions (helical) follow at residues 5–25, 39–59, 63–83, 102–122, 134–154, and 171–191; these read ILLI…FLGL, VGMG…AYLV, ILIP…VIAV, LLGI…VALL, VVYG…FAAL, and SIAL…TGLV.

Belongs to the NqrDE/RnfAE family. The complex is composed of six subunits: RnfA, RnfB, RnfC, RnfD, RnfE and RnfG.

It is found in the cell inner membrane. In terms of biological role, part of a membrane-bound complex that couples electron transfer with translocation of ions across the membrane. The protein is Ion-translocating oxidoreductase complex subunit A of Haemophilus influenzae (strain ATCC 51907 / DSM 11121 / KW20 / Rd).